The primary structure comprises 244 residues: tRNA pseudouridine synthase A (244 aa).

Catalysis depends on D52, which acts as the Nucleophile. Substrate is bound at residue Y111.

The protein belongs to the tRNA pseudouridine synthase TruA family. As to quaternary structure, homodimer.

The enzyme catalyses uridine(38/39/40) in tRNA = pseudouridine(38/39/40) in tRNA. Its function is as follows. Formation of pseudouridine at positions 38, 39 and 40 in the anticodon stem and loop of transfer RNAs. In Thermosipho melanesiensis (strain DSM 12029 / CIP 104789 / BI429), this protein is tRNA pseudouridine synthase A.